Consider the following 254-residue polypeptide: Probable glutathione transferase omega-2 (254 aa).

A GST N-terminal domain is found at 25–105 (GTIRIYNMRY…YLDDIYPEPR (81 aa)). The Nucleophile role is filled by Cys35. Glutathione-binding positions include Lys62, Val75, and 89 to 90 (ES). The GST C-terminal domain occupies 110-239 (DHYEKVQQKL…SQPTETAVEF (130 aa)).

The protein belongs to the GST superfamily. Omega family.

The enzyme catalyses RX + glutathione = an S-substituted glutathione + a halide anion + H(+). It carries out the reaction L-dehydroascorbate + 2 glutathione = glutathione disulfide + L-ascorbate. It catalyses the reaction methylarsonate + 2 glutathione + H(+) = methylarsonous acid + glutathione disulfide + H2O. Its function is as follows. Exhibits glutathione-dependent thiol transferase activity. Has dehydroascorbate reductase activity and may contribute to the recycling of ascorbic acid. Participates in the biotransformation of inorganic arsenic and reduces monomethylarsonic acid (MMA). The protein is Probable glutathione transferase omega-2 (gsto-2) of Caenorhabditis elegans.